The following is a 201-amino-acid chain: Ribonuclease HII (201 aa).

The RNase H type-2 domain occupies 12–201; it reads GIVCGIDEVG…FAPVAQYMLF (190 aa). Residues aspartate 18, glutamate 19, and aspartate 113 each contribute to the a divalent metal cation site.

The protein belongs to the RNase HII family. Mn(2+) is required as a cofactor. Requires Mg(2+) as cofactor.

It is found in the cytoplasm. It carries out the reaction Endonucleolytic cleavage to 5'-phosphomonoester.. Endonuclease that specifically degrades the RNA of RNA-DNA hybrids. This chain is Ribonuclease HII (rnhB), found in Paramagnetospirillum magneticum (strain ATCC 700264 / AMB-1) (Magnetospirillum magneticum).